The sequence spans 399 residues: Phosphoglycerate kinase (399 aa).

Substrate contacts are provided by residues 22-24, arginine 38, 61-64, arginine 119, and arginine 152; these read DFN and HLGR. Residues lysine 205, glycine 296, glutamate 327, and 353–356 contribute to the ATP site; that span reads GGDT.

The protein belongs to the phosphoglycerate kinase family. As to quaternary structure, monomer.

It is found in the cytoplasm. The enzyme catalyses (2R)-3-phosphoglycerate + ATP = (2R)-3-phospho-glyceroyl phosphate + ADP. The protein operates within carbohydrate degradation; glycolysis; pyruvate from D-glyceraldehyde 3-phosphate: step 2/5. This chain is Phosphoglycerate kinase, found in Nitratiruptor sp. (strain SB155-2).